Consider the following 144-residue polypeptide: Mediator of RNA polymerase II transcription subunit 9 (144 aa).

Residues 85 to 143 are a coiled coil; sequence QDCNHKIFELQKRFESAREQIRQLPGIDFNKEEQQQRLELLRNQLKLKQQLIRKYKDTE.

It belongs to the Mediator complex subunit 9 family. In terms of assembly, component of the Mediator complex.

Its subcellular location is the nucleus. In terms of biological role, component of the Mediator complex, a coactivator involved in the regulated transcription of nearly all RNA polymerase II-dependent genes. Mediator functions as a bridge to convey information from gene-specific regulatory proteins to the basal RNA polymerase II transcription machinery. Mediator is recruited to promoters by direct interactions with regulatory proteins and serves as a scaffold for the assembly of a functional preinitiation complex with RNA polymerase II and the general transcription factors. This is Mediator of RNA polymerase II transcription subunit 9 (MED9) from Drosophila melanogaster (Fruit fly).